The chain runs to 237 residues: Uridylate kinase (237 aa).

Residue 11 to 14 (KLSG) participates in ATP binding. G53 lines the UMP pocket. The ATP site is built by G54 and R58. UMP contacts are provided by residues D73 and 134 to 141 (TGNPFFTT). T161, Y167, and D170 together coordinate ATP.

This sequence belongs to the UMP kinase family. As to quaternary structure, homohexamer.

Its subcellular location is the cytoplasm. The catalysed reaction is UMP + ATP = UDP + ADP. The protein operates within pyrimidine metabolism; CTP biosynthesis via de novo pathway; UDP from UMP (UMPK route): step 1/1. With respect to regulation, inhibited by UTP. In terms of biological role, catalyzes the reversible phosphorylation of UMP to UDP. The chain is Uridylate kinase from Paraburkholderia xenovorans (strain LB400).